The chain runs to 510 residues: Probable inorganic carbon transporter subunit DabB (510 aa).

A run of 14 helical transmembrane segments spans residues 9-29, 37-57, 68-88, 105-122, 125-145, 158-178, 204-224, 226-246, 266-286, 303-323, 355-375, 382-402, 410-430, and 446-466; these read TLLT…LLFL, FVHI…LALV, WHLD…GLII, YFAL…AWLS, LRFM…LIGL, ISGY…IWLF, TGIN…WPFQ, WLIE…AGLV, QIIL…ISLV, GFML…HLIL, LWMI…WFIT, LVSA…LVVF, IAGL…HNSL, and APAV…CTFV.

This sequence belongs to the inorganic carbon transporter (TC 9.A.2) DabB family. As to quaternary structure, forms a complex with DabA.

It localises to the cell membrane. Part of an energy-coupled inorganic carbon pump. Expression of both dabA and dabB (DA2) restores growth in ambient air to E.coli deleted of its carbonic anhydrase genes (called CAfree, deletion of 'can' and 'cynT'). This is Probable inorganic carbon transporter subunit DabB from Bacillus anthracis.